A 667-amino-acid polypeptide reads, in one-letter code: Primary amine oxidase (667 aa).

Positions 1-18 are cleaved as a signal peptide; that stretch reads KFALFSVLTLLSFHAVFS. An N-linked (GlcNAc...) asparagine glycan is attached at N149. The cysteines at positions 155 and 176 are disulfide-linked. Residues 216–246 form a disordered region; that stretch reads PTAENTEYQVSKQSPPFGPKQHSLTSHQPQG. A compositionally biased stretch (polar residues) spans 218–229; the sequence is AENTEYQVSKQS. N-linked (GlcNAc...) asparagine glycosylation is present at N252. 316-327 serves as a coordination point for substrate; it reads FFDSGEFGFGLS. The Proton acceptor role is filled by D318. C337 and C363 are joined by a disulfide. Residue N382 is glycosylated (N-linked (GlcNAc...) asparagine). 402 to 407 is a substrate binding site; that stretch reads VGNYDN. Y405 (schiff-base intermediate with substrate; via topaquinone) is an active-site residue. At Y405 the chain carries 2',4',5'-topaquinone. Residues H460 and H462 each contribute to the Cu cation site. 3 residues coordinate Mn(2+): D469, F470, and D471. The N-linked (GlcNAc...) asparagine glycan is linked to N576. Mn(2+)-binding residues include D610 and I611. Position 621 (H621) interacts with Cu cation.

The protein belongs to the copper/topaquinone oxidase family. As to quaternary structure, homodimer. Cu cation is required as a cofactor. Requires Zn(2+) as cofactor. L-topaquinone serves as cofactor. It depends on Mn(2+) as a cofactor. Post-translationally, glycosylated; contains two carbohydrate chains per monomer. Topaquinone (TPQ) is generated by copper-dependent autoxidation of a specific tyrosyl residue.

The catalysed reaction is a primary methyl amine + O2 + H2O = an aldehyde + H2O2 + NH4(+). The chain is Primary amine oxidase from Lens culinaris (Lentil).